The following is a 264-amino-acid chain: Shikimate dehydrogenase (NADP(+)) (264 aa).

Shikimate-binding positions include 14–16 (SLS) and T59. The active-site Proton acceptor is K63. E75 contacts NADP(+). N84 and D99 together coordinate shikimate. Residues 122 to 126 (GAGGA), 144 to 149 (NRTPSK), and I205 each bind NADP(+). Y207 contacts shikimate. G228 lines the NADP(+) pocket.

It belongs to the shikimate dehydrogenase family. In terms of assembly, homodimer.

It carries out the reaction shikimate + NADP(+) = 3-dehydroshikimate + NADPH + H(+). Its pathway is metabolic intermediate biosynthesis; chorismate biosynthesis; chorismate from D-erythrose 4-phosphate and phosphoenolpyruvate: step 4/7. In terms of biological role, involved in the biosynthesis of the chorismate, which leads to the biosynthesis of aromatic amino acids. Catalyzes the reversible NADPH linked reduction of 3-dehydroshikimate (DHSA) to yield shikimate (SA). In Pyrococcus abyssi (strain GE5 / Orsay), this protein is Shikimate dehydrogenase (NADP(+)).